Here is a 194-residue protein sequence, read N- to C-terminus: UPF0301 protein FTH_1193 (194 aa).

The protein belongs to the UPF0301 (AlgH) family.

In Francisella tularensis subsp. holarctica (strain OSU18), this protein is UPF0301 protein FTH_1193.